The chain runs to 207 residues: Suppressor of IKBKE 1 (207 aa).

2 coiled-coil regions span residues 4–32 and 154–193; these read TIDK…LIDQ and DAIQ…SLHS. Residues 186–207 are disordered; it reads TSKESLHSSKRESEWNFSEKTQ. Residues 189 to 199 are compositionally biased toward basic and acidic residues; the sequence is ESLHSSKRESE.

It belongs to the SIKE family. As to quaternary structure, interacts with IKBKE and TBK1 via its coiled coil region. Interaction with TBK1 is disrupted upon viral infection or TLR3 stimulation. Interacts with CDC42BPB. Associates with the STRIPAK core complex composed of PP2A catalytic and scaffolding subunits, the striatins (PP2A regulatory subunits), the striatin-associated proteins MOB4, STRIP1 and STRIP2, PDCD10 and members of the STE20 kinases, such as STK24 and STK26.

Its function is as follows. Suppressor of IKK-epsilon. Associates with the striatin-interacting phosphatase and kinase (STRIPAK) core complex, forming the extended (SIKE1:SLMAP)STRIPAK complex. The (SIKE1:SLMAP)STRIPAK complex dephosphorylates STK3 leading to the inhibition of Hippo signaling and the control of cell growth. In Xenopus tropicalis (Western clawed frog), this protein is Suppressor of IKBKE 1 (sike1).